The chain runs to 240 residues: DNA repair protein RecO (240 aa).

The protein belongs to the RecO family.

In terms of biological role, involved in DNA repair and RecF pathway recombination. This chain is DNA repair protein RecO, found in Actinobacillus pleuropneumoniae serotype 7 (strain AP76).